The sequence spans 30 residues: 136 kDa hydroxyproline-rich cell wall glycoprotein, major component (30 aa).

Proline 8, proline 9, proline 10, proline 11, proline 12, proline 17, proline 18, proline 19, proline 20, proline 26, proline 27, proline 28, and proline 29 each carry 4-hydroxyproline.

O-glycosylated.

It localises to the secreted. It is found in the cell wall. This chain is 136 kDa hydroxyproline-rich cell wall glycoprotein, major component, found in Phaseolus vulgaris (Kidney bean).